A 641-amino-acid polypeptide reads, in one-letter code: Putative phagocytic receptor 1a (641 aa).

Residues 1 to 23 (MKINKKQIVFFILFSIFLNHVNG) form the signal peptide. The Extracellular segment spans residues 24–279 (IFYLPGMIPH…ESNDNSVHWF (256 aa)). Residues 280-300 (SILNSLMIVFILTVMVAMIII) form a helical membrane-spanning segment. Topologically, residues 301–349 (RTLKKDIRRYTSIDTSEDRDSQEETGWKMIHGDVFRPPSHPMLLSVCIG) are cytoplasmic. A helical membrane pass occupies residues 350 to 370 (SGVQIFSMTLITMIFAVLGFL). The Extracellular portion of the chain corresponds to 371 to 374 (SPAN). The helical transmembrane segment at 375–395 (IGGLATALIVLFVLSAMFAGY) threads the bilayer. The Cytoplasmic portion of the chain corresponds to 396-413 (FSTRVFTIFKGRNWKKNT). Residues 414–434 (IYTALSMPGIIFGIFFFVNMF) form a helical membrane-spanning segment. Residues 435-445 (LRGAKSSAAVP) lie on the Extracellular side of the membrane. The chain crosses the membrane as a helical span at residues 446-466 (FGTFASIIAMWFGISVPLVFL). The Cytoplasmic segment spans residues 467–502 (GSYFASKKPVPEDPVRTNQIPRQVPDQIWYMNPYLS). The chain crosses the membrane as a helical span at residues 503–523 (ILMGGILPFGAVFIELHFILT). Topologically, residues 524-532 (SLWDNQFYY) are extracellular. The chain crosses the membrane as a helical span at residues 533–553 (IFGFLFIVLMILIVTSAEISI). The Cytoplasmic segment spans residues 554 to 578 (VMCYFQLCAEDHHWWWRSFLTAGSS). The helical transmembrane segment at 579 to 599 (SLYMFIYSVSFFRYLGITKFI) threads the bilayer. The Extracellular portion of the chain corresponds to 600 to 608 (SSLLDFSYS). Residues 609 to 629 (FIMSLAFAALTGTIGFYSCYF) form a helical membrane-spanning segment. At 630 to 641 (LVRKIYSSIHIN) the chain is on the cytoplasmic side.

The protein belongs to the nonaspanin (TM9SF) (TC 9.A.2) family.

The protein resides in the membrane. Functionally, involved in adhesion, phagocytosis of hydrophilic particles and intracellular killing of bacteria. Associates with proteins harboring glycine-rich transmembrane domains and ensures their efficient localization to the cell surface. The protein is Putative phagocytic receptor 1a (phg1a) of Dictyostelium discoideum (Social amoeba).